Reading from the N-terminus, the 245-residue chain is MAPILELLPAVDVAGGQAVQLVQGKDGTGGRYGDPLNAALTWQNAGAEWIHLVDLDAAFGRGHNRELLASIVGKLDIKVELSGGIRDDESLNAALATGCHRVNIGTAALENPDWCAKVIAEHGDRVAIGLDVRGTTLAARGWTRDGGDLYETLERLEAAGCARYIVTDVNKDGTLKGPNLDLLRDVCSRTDKPVVASGGISSLDDLRALAALVPEGVEGAIMGTALYEGAFTLEEALATVREVAQ.

The active-site Proton acceptor is the Asp12. Asp131 acts as the Proton donor in catalysis.

The protein belongs to the HisA/HisF family.

It is found in the cytoplasm. It carries out the reaction 1-(5-phospho-beta-D-ribosyl)-5-[(5-phospho-beta-D-ribosylamino)methylideneamino]imidazole-4-carboxamide = 5-[(5-phospho-1-deoxy-D-ribulos-1-ylimino)methylamino]-1-(5-phospho-beta-D-ribosyl)imidazole-4-carboxamide. Its pathway is amino-acid biosynthesis; L-histidine biosynthesis; L-histidine from 5-phospho-alpha-D-ribose 1-diphosphate: step 4/9. This chain is 1-(5-phosphoribosyl)-5-[(5-phosphoribosylamino)methylideneamino] imidazole-4-carboxamide isomerase, found in Thermobifida fusca (strain YX).